Here is a 549-residue protein sequence, read N- to C-terminus: Cytochrome c oxidase subunit 1 homolog, bacteroid (549 aa).

Transmembrane regions (helical) follow at residues 12–32 (IGESGLAVVFAATAFLCVIAA), 39–59 (PFAFHAALSAAASVAAVFCIV), and 87–107 (FSSFMAMFWGIAGFLVGLIIA). His-131 is a heme b binding site. 8 consecutive transmembrane segments (helical) span residues 132–152 (TSAVIFAFGGNVLIATSFYVV), 168–188 (FVVVGYNFFILVAGTGYLLGV), 201–221 (ADLWLTIVWVVYLLVFLATII), 228–248 (IFVANWFYLAFIVTIAVLHLG), 279–299 (GHNAVGFFLTAGFLAIMYYFI), 312–332 (LSIIHFWALIFLYIWAGPHHL), 344–364 (LGMTFSIMLWMPSWGGMINGL), and 382–402 (MLVVSVAFYGMSTFEGPMMSI). Cu cation contacts are provided by His-280, His-330, and His-331. His-418 and His-420 together coordinate heme b. The next 3 membrane-spanning stretches (helical) occupy residues 423-443 (ALGWVGFVSFGALYCLVPWAW), 458-478 (FWVATLGIVLYISAMWVSGIL), and 512-532 (AGGGLFLIGALIMAYNLWMTV).

The protein belongs to the heme-copper respiratory oxidase family. It depends on Cu(2+) as a cofactor. Heme b serves as cofactor.

Its subcellular location is the cell membrane. The enzyme catalyses 4 Fe(II)-[cytochrome c] + O2 + 8 H(+)(in) = 4 Fe(III)-[cytochrome c] + 2 H2O + 4 H(+)(out). The protein operates within energy metabolism; oxidative phosphorylation. Functionally, cytochrome c oxidase is the component of the respiratory chain that catalyzes the reduction of oxygen to water. Subunits 1-3 form the functional core of the enzyme complex. Co I is the catalytic subunit of the enzyme. Electrons originating in cytochrome c or a quinol are transferred to the bimetallic center formed by a high-spin heme and copper B. The chain is Cytochrome c oxidase subunit 1 homolog, bacteroid (fixN) from Bradyrhizobium diazoefficiens (strain JCM 10833 / BCRC 13528 / IAM 13628 / NBRC 14792 / USDA 110).